Consider the following 504-residue polypeptide: MSDLLDDEFYEEEFENDLLDASEFEDEFDEDAEIDDDGFTVERKRRRAHSVSYRVVSVRDLRASLNEKINQLTSIIDLTREQVLGLYRYFKWNRERLLERYIDAPEESLQKAGVGLSGSKQREVVHHEGTCEICYDEGCLPFFSAECDHEFCLACYRQYLDSRISEGESVIQCPEESCTQIVSIQSITKVLDEKSLDRYHRLLDRSFVDDNDHLRWCPAPDCEFAIECHVTQASLSSVVPTVTCNCGKQFCFGCGHDNHQPTICPLVKIWLQKCQDDSETANWIHANTKECPKCSTTIEKNGGCNHMTCKKCKYEFCWVCLGPWTEHGNNWYTCNRYEEKSSTSARDSQSKSRASLERYLHYYNRFANHEQSAKLDHELYEHTHKRMTQMQVDSNLSWVEVQFLKNAVDILFQCRQTLKWTYAFAYYLARNNQTEIFEDNQRDLELAVENLSELCERPCQDCSLSVFKQRVLDKTVYVRSRRDVLLDDTARGLAEGRWEYVVDV.

A TRIAD supradomain region spans residues 127 to 338 (HEGTCEICYD…NNWYTCNRYE (212 aa)). Positions 131, 134, 147, 149, 152, 155, 173, 178, 217, 222, 244, 246, 251, 254, 259, 264, 291, and 294 each coordinate Zn(2+). An RING-type 1 zinc finger spans residues 131–178 (CEICYDEGCLPFFSAECDHEFCLACYRQYLDSRISEGESVIQCPEESC). An IBR-type zinc finger spans residues 197–264 (DRYHRLLDRS…GHDNHQPTIC (68 aa)). The RING-type 2; atypical zinc-finger motif lies at 291 to 320 (CPKCSTTIEKNGGCNHMTCKKCKYEFCWVC). Residue Cys304 is part of the active site. Positions 309, 312, 317, 320, 327, and 334 each coordinate Zn(2+).

This sequence belongs to the RBR family.

It localises to the cytoplasm. Its subcellular location is the nucleus. It catalyses the reaction [E2 ubiquitin-conjugating enzyme]-S-ubiquitinyl-L-cysteine + [acceptor protein]-L-lysine = [E2 ubiquitin-conjugating enzyme]-L-cysteine + [acceptor protein]-N(6)-ubiquitinyl-L-lysine.. Its pathway is protein modification; protein ubiquitination. Probable ubiquitin-protein ligase involved in the degradation-related ubiquitination of histones. Contributes to the post-translational regulation of histone protein levels by polyubiquitination of excess histones for subsequent degradation. This Schizosaccharomyces pombe (strain 972 / ATCC 24843) (Fission yeast) protein is E3 ubiquitin-protein ligase dbl4.